Consider the following 141-residue polypeptide: UPF0179 protein Cmaq_1008 (141 aa).

The protein belongs to the UPF0179 family.

This is UPF0179 protein Cmaq_1008 from Caldivirga maquilingensis (strain ATCC 700844 / DSM 13496 / JCM 10307 / IC-167).